The chain runs to 605 residues: Glutamine--fructose-6-phosphate aminotransferase [isomerizing] (605 aa).

Cys2 functions as the Nucleophile; for GATase activity in the catalytic mechanism. The Glutamine amidotransferase type-2 domain occupies 2 to 220 (CGIVGVTGKD…DGEIVVVKPD (219 aa)). SIS domains are found at residues 286 to 426 (LLTA…VDQP) and 458 to 595 (AKSA…VDKP). Catalysis depends on Lys600, which acts as the For Fru-6P isomerization activity.

As to quaternary structure, homodimer.

It localises to the cytoplasm. It catalyses the reaction D-fructose 6-phosphate + L-glutamine = D-glucosamine 6-phosphate + L-glutamate. In terms of biological role, catalyzes the first step in hexosamine metabolism, converting fructose-6P into glucosamine-6P using glutamine as a nitrogen source. The protein is Glutamine--fructose-6-phosphate aminotransferase [isomerizing] of Lactiplantibacillus plantarum (strain ATCC BAA-793 / NCIMB 8826 / WCFS1) (Lactobacillus plantarum).